A 552-amino-acid polypeptide reads, in one-letter code: Arginine--tRNA ligase (552 aa).

The 'HIGH' region motif lies at 123-133 (ANPTGPLTIGR).

This sequence belongs to the class-I aminoacyl-tRNA synthetase family. Monomer.

It localises to the cytoplasm. The enzyme catalyses tRNA(Arg) + L-arginine + ATP = L-arginyl-tRNA(Arg) + AMP + diphosphate. In Chlorobium phaeovibrioides (strain DSM 265 / 1930) (Prosthecochloris vibrioformis (strain DSM 265)), this protein is Arginine--tRNA ligase.